The chain runs to 518 residues: Centromere protein T (518 aa).

Residues 1-70 form a disordered region; it reads MADLSSPDGD…RKHSHGTGSV (70 aa). The segment covering 19–28 has biased composition (basic and acidic residues); that stretch reads HVLDTADSHT. Positions 34–57 are enriched in polar residues; the sequence is STQTNPQRRRSQTPYSKRQGSQRK. Threonine 86 is subject to Phosphothreonine. The interval 94–381 is flexible stalk domain; that stretch reads ILLTAPESST…EPHQLFEPPP (288 aa). Disordered regions lie at residues 102–156, 271–362, and 375–412; these read STVM…KRKQ, VHHS…ELSS, and QLFEPPPSPGVAAVSSESVPAKLPSRTRTAQPRHHQDP. Positions 294–306 are enriched in polar residues; sequence TPSTGTRPQSQMS. 7 positions are modified to phosphoserine: serine 313, serine 324, serine 333, serine 345, serine 346, serine 357, and serine 382. Basic and acidic residues predominate over residues 326–343; it reads ELREAVGSKEAEEPKDLE. Over residues 384–395 the composition is skewed to low complexity; that stretch reads GVAAVSSESVPA.

The protein belongs to the CENP-T/CNN1 family. In terms of assembly, component of the CENPA-CAD complex, composed of CENPI, CENPK, CENPL, CENPO, CENPP, CENPQ, CENPR and CENPS. The CENPA-CAD complex is probably recruited on centromeres by the CENPA-NAC complex, at least composed of CENPA, CENPC, CENPH, CENPM, CENPN, CENPT and CENPU. Identified in a centromeric complex containing histones H2A, H2B, H3 and H4, and at least CENPA, CENPB, CENPC, CENPT, CENPN, HJURP, SUPT16H, SSRP1 and RSF1. Interacts (via N-terminus) with the NDC80 complex. Heterodimer with CENPW; this dimer coassembles with CENPS-CENPX heterodimers at centromeres to form the tetrameric CENP-T-W-S-X complex. Post-translationally, dynamically phosphorylated during the cell cycle. Phosphorylated during G2 phase, metaphase and anaphase, but not during telophase or G1 phase.

It localises to the nucleus. The protein localises to the chromosome. The protein resides in the centromere. Its subcellular location is the kinetochore. Functionally, component of the CENPA-NAC (nucleosome-associated) complex, a complex that plays a central role in assembly of kinetochore proteins, mitotic progression and chromosome segregation. The CENPA-NAC complex recruits the CENPA-CAD (nucleosome distal) complex and may be involved in incorporation of newly synthesized CENPA into centromeres. Part of a nucleosome-associated complex that binds specifically to histone H3-containing nucleosomes at the centromere, as opposed to nucleosomes containing CENPA. Component of the heterotetrameric CENP-T-W-S-X complex that binds and supercoils DNA, and plays an important role in kinetochore assembly. CENPT has a fundamental role in kinetochore assembly and function. It is one of the inner kinetochore proteins, with most further proteins binding downstream. Required for normal chromosome organization and normal progress through mitosis. The sequence is that of Centromere protein T (Cenpt) from Rattus norvegicus (Rat).